The following is a 477-amino-acid chain: Argininosuccinate lyase (477 aa).

The segment covering 1–18 (MTTSSHSSEQPTSTQTSG) has biased composition (polar residues). Residues 1 to 21 (MTTSSHSSEQPTSTQTSGMWG) are disordered.

This sequence belongs to the lyase 1 family. Argininosuccinate lyase subfamily.

The protein resides in the cytoplasm. It catalyses the reaction 2-(N(omega)-L-arginino)succinate = fumarate + L-arginine. It functions in the pathway amino-acid biosynthesis; L-arginine biosynthesis; L-arginine from L-ornithine and carbamoyl phosphate: step 3/3. The polypeptide is Argininosuccinate lyase (Acinetobacter baylyi (strain ATCC 33305 / BD413 / ADP1)).